A 502-amino-acid polypeptide reads, in one-letter code: Transmembrane prolyl 4-hydroxylase (502 aa).

A disordered region spans residues 1-29; that stretch reads MAAAAVTGQRPETAAAEEASRPQWAPPDH. At 1-60 the chain is on the cytoplasmic side; that stretch reads MAAAAVTGQRPETAAAEEASRPQWAPPDHCQAQAAAGLGDGEDAPVRPLCKPRGICSRAY. Residues 61-81 form a helical; Signal-anchor for type II membrane protein membrane-spanning segment; that stretch reads FLVLMVFVHLYLGNVLALLLF. Residues 82-502 lie on the Lumenal side of the membrane; sequence VHYSNGDESS…RAYRDARVEL (421 aa). The tract at residues 89–111 is disordered; it reads ESSDPGPQHRAQGPGPEPTLGPL. EF-hand domains are found at residues 185 to 220 and 224 to 259; these read TMQV…GNGW and PESI…DFHK. Ca(2+) is bound by residues Asp-198, Asn-200, Asp-202, His-204, Glu-209, Asp-237, Asp-239, Asp-241, and Glu-248. One can recognise a Fe2OG dioxygenase domain in the interval 310-460; it reads LSEPLQVVRY…KWIANNWINV (151 aa). Fe cation-binding residues include His-328 and Asp-330. Residues Asn-348 and Asn-368 are each glycosylated (N-linked (GlcNAc...) asparagine). Residue Glu-374 participates in Fe cation binding. N-linked (GlcNAc...) asparagine glycosylation is present at Asn-382. Lys-451 contacts 2-oxoglutarate.

As to quaternary structure, homodimer. Fe(2+) is required as a cofactor. The cofactor is L-ascorbate. In terms of processing, glycosylated. Widely expressed with highest levels in adult pancreas, heart, skeletal muscle, brain, placenta, kidney and adrenal gland. Expressed at lower levels in epiphyseal cartilage and in fibroblasts.

Its subcellular location is the endoplasmic reticulum membrane. It carries out the reaction L-prolyl-[hypoxia-inducible factor alpha subunit] + 2-oxoglutarate + O2 = trans-4-hydroxy-L-prolyl-[hypoxia-inducible factor alpha subunit] + succinate + CO2. Catalyzes the post-translational formation of 4-hydroxyproline in hypoxia-inducible factor (HIF) alpha proteins. Hydroxylates HIF1A at 'Pro-402' and 'Pro-564'. May function as a cellular oxygen sensor and, under normoxic conditions, may target HIF through the hydroxylation for proteasomal degradation via the von Hippel-Lindau ubiquitination complex. This is Transmembrane prolyl 4-hydroxylase (P4HTM) from Homo sapiens (Human).